The following is a 154-amino-acid chain: 6,7-dimethyl-8-ribityllumazine synthase (154 aa).

Residues tryptophan 22, 56-58, and 80-82 each bind 5-amino-6-(D-ribitylamino)uracil; these read AWE and CVV. Residue 85–86 coordinates (2S)-2-hydroxy-3-oxobutyl phosphate; that stretch reads DT. The Proton donor role is filled by histidine 88. A 5-amino-6-(D-ribitylamino)uracil-binding site is contributed by asparagine 113. Residue arginine 127 participates in (2S)-2-hydroxy-3-oxobutyl phosphate binding.

This sequence belongs to the DMRL synthase family. As to quaternary structure, forms an icosahedral capsid composed of 60 subunits, arranged as a dodecamer of pentamers.

The catalysed reaction is (2S)-2-hydroxy-3-oxobutyl phosphate + 5-amino-6-(D-ribitylamino)uracil = 6,7-dimethyl-8-(1-D-ribityl)lumazine + phosphate + 2 H2O + H(+). Its pathway is cofactor biosynthesis; riboflavin biosynthesis; riboflavin from 2-hydroxy-3-oxobutyl phosphate and 5-amino-6-(D-ribitylamino)uracil: step 1/2. Functionally, catalyzes the formation of 6,7-dimethyl-8-ribityllumazine by condensation of 5-amino-6-(D-ribitylamino)uracil with 3,4-dihydroxy-2-butanone 4-phosphate. This is the penultimate step in the biosynthesis of riboflavin. The sequence is that of 6,7-dimethyl-8-ribityllumazine synthase from Xylella fastidiosa (strain M23).